A 239-amino-acid polypeptide reads, in one-letter code: Ribonuclease PH (239 aa).

Residues R87 and 125-127 contribute to the phosphate site; that span reads GTR.

The protein belongs to the RNase PH family. Homohexameric ring arranged as a trimer of dimers.

The catalysed reaction is tRNA(n+1) + phosphate = tRNA(n) + a ribonucleoside 5'-diphosphate. Functionally, phosphorolytic 3'-5' exoribonuclease that plays an important role in tRNA 3'-end maturation. Removes nucleotide residues following the 3'-CCA terminus of tRNAs; can also add nucleotides to the ends of RNA molecules by using nucleoside diphosphates as substrates, but this may not be physiologically important. Probably plays a role in initiation of 16S rRNA degradation (leading to ribosome degradation) during starvation. The chain is Ribonuclease PH from Cellvibrio japonicus (strain Ueda107) (Pseudomonas fluorescens subsp. cellulosa).